A 301-amino-acid chain; its full sequence is tRNA pseudouridine synthase B (301 aa).

Asp-45 (nucleophile) is an active-site residue.

Belongs to the pseudouridine synthase TruB family. Type 1 subfamily.

The catalysed reaction is uridine(55) in tRNA = pseudouridine(55) in tRNA. Responsible for synthesis of pseudouridine from uracil-55 in the psi GC loop of transfer RNAs. The chain is tRNA pseudouridine synthase B from Streptomyces coelicolor (strain ATCC BAA-471 / A3(2) / M145).